Reading from the N-terminus, the 173-residue chain is NADH-ubiquinone oxidoreductase chain 6 (173 aa).

5 helical membrane-spanning segments follow: residues 1–21, 27–47, 48–68, 91–111, and 139–159; these read MTYF…AVAS, YGVV…LSLG, VSFV…VVFV, GVSF…IGCL, and CGVG…FVVL.

This sequence belongs to the complex I subunit 6 family.

Its subcellular location is the mitochondrion membrane. It catalyses the reaction a ubiquinone + NADH + 5 H(+)(in) = a ubiquinol + NAD(+) + 4 H(+)(out). In terms of biological role, core subunit of the mitochondrial membrane respiratory chain NADH dehydrogenase (Complex I) that is believed to belong to the minimal assembly required for catalysis. Complex I functions in the transfer of electrons from NADH to the respiratory chain. The immediate electron acceptor for the enzyme is believed to be ubiquinone. The polypeptide is NADH-ubiquinone oxidoreductase chain 6 (MT-ND6) (Fratercula cirrhata (Tufted puffin)).